We begin with the raw amino-acid sequence, 62 residues long: Flavodoxin (62 aa).

One can recognise a Flavodoxin-like domain in the interval 4-62 (IGIFFGTDTGKTRKIAKMIHKQLGELADAPVNINRTTLDDFMAYPVLLLGTPTLGDGQL).

Belongs to the flavodoxin family. FMN serves as cofactor.

Its function is as follows. Low-potential electron donor to a number of redox enzymes. NifF is the electron donor to nitrogenase. This Klebsiella oxytoca protein is Flavodoxin (nifF).